The following is a 232-amino-acid chain: Ubiquinone biosynthesis O-methyltransferase (232 aa).

Residues arginine 36, glycine 55, aspartate 76, and leucine 120 each contribute to the S-adenosyl-L-methionine site.

It belongs to the methyltransferase superfamily. UbiG/COQ3 family.

The catalysed reaction is a 3-demethylubiquinol + S-adenosyl-L-methionine = a ubiquinol + S-adenosyl-L-homocysteine + H(+). It carries out the reaction a 3-(all-trans-polyprenyl)benzene-1,2-diol + S-adenosyl-L-methionine = a 2-methoxy-6-(all-trans-polyprenyl)phenol + S-adenosyl-L-homocysteine + H(+). It participates in cofactor biosynthesis; ubiquinone biosynthesis. Functionally, O-methyltransferase that catalyzes the 2 O-methylation steps in the ubiquinone biosynthetic pathway. In Pseudomonas paraeruginosa (strain DSM 24068 / PA7) (Pseudomonas aeruginosa (strain PA7)), this protein is Ubiquinone biosynthesis O-methyltransferase.